The chain runs to 335 residues: Beta-hexosaminidase (335 aa).

Substrate is bound by residues Asp-60, Arg-68, Arg-133, and 163 to 164 (KH). Catalysis depends on His-176, which acts as the Proton donor/acceptor. The Nucleophile role is filled by Asp-247.

Belongs to the glycosyl hydrolase 3 family. NagZ subfamily. In terms of assembly, monomer.

Its subcellular location is the cytoplasm. It catalyses the reaction Hydrolysis of terminal non-reducing N-acetyl-D-hexosamine residues in N-acetyl-beta-D-hexosaminides.. It participates in cell wall biogenesis; peptidoglycan recycling. Its function is as follows. Plays a role in peptidoglycan recycling by cleaving the terminal beta-1,4-linked N-acetylglucosamine (GlcNAc) from peptide-linked peptidoglycan fragments, giving rise to free GlcNAc, anhydro-N-acetylmuramic acid and anhydro-N-acetylmuramic acid-linked peptides. The protein is Beta-hexosaminidase of Xylella fastidiosa (strain 9a5c).